The following is a 426-amino-acid chain: Histone-binding protein RBBP7 (426 aa).

Alanine 2 carries the N-acetylalanine modification. A Phosphoserine modification is found at serine 3. N6-acetyllysine; alternate is present on lysine 4. Lysine 4 participates in a covalent cross-link: Glycyl lysine isopeptide (Lys-Gly) (interchain with G-Cter in SUMO2); alternate. Lysine 4 is covalently cross-linked (Glycyl lysine isopeptide (Lys-Gly) (interchain with G-Cter in ubiquitin); alternate). Threonine 10 is subject to Phosphothreonine. WD repeat units follow at residues 47 to 122, 128 to 173, 181 to 217, 228 to 269, 275 to 312, 318 to 370, and 377 to 404; these read QWLP…KINH, RARY…LRLR, GLSW…KIVD, VVED…HLVD, VNCL…LHTF, EIFQ…LFIH, and ISDF…IWQM. Residue serine 95 is modified to Phosphoserine. Residue lysine 101 forms a Glycyl lysine isopeptide (Lys-Gly) (interchain with G-Cter in SUMO2) linkage. The residue at position 119 (lysine 119) is an N6-acetyllysine. Residue lysine 155 forms a Glycyl lysine isopeptide (Lys-Gly) (interchain with G-Cter in SUMO2) linkage. Residue lysine 159 is modified to N6-acetyllysine; alternate. A Glycyl lysine isopeptide (Lys-Gly) (interchain with G-Cter in SUMO2); alternate cross-link involves residue lysine 159. Serine 355 is subject to Phosphoserine.

The protein belongs to the WD repeat RBAP46/RBAP48/MSI1 family. Binds directly to helix 1 of the histone fold of histone H4, a region that is not accessible when H4 is in chromatin. Subunit of the type B histone acetyltransferase (HAT) complex, composed of RBBP7 and HAT1. Subunit of the core histone deacetylase (HDAC) complex, which is composed of HDAC1, HDAC2, RBBP4 and RBBP7. The core HDAC complex associates with SIN3A, ARID4B/SAP180, SAP18, SAP30, SAP130, SUDS3/SAP45 and possibly ARID4A/RBP1 and ING1 to form the SIN3 HDAC complex. Component of the nucleosome remodeling and deacetylase (NuRD) repressor complex, composed of core proteins MTA1, MTA2, MTA3, RBBP4, RBBP7, HDAC1, HDAC2, MBD2, MBD3, and peripherally associated proteins CDK2AP1, CDK2AP2, GATAD2A, GATAD2B, CHD3, CHD4 and CHD5. The exact stoichiometry of the NuRD complex is unknown, and some subunits such as MBD2 and MBD3, GATAD2A and GATAD2B, and CHD3, CHD4 and CHD5 define mutually exclusive NuRD complexes. The NuRD complex may interact with MBD3L1. The NuRD complex may interact with MBD3L2. Subunit of the PRC2/EED-EZH2 complex, which is composed of at least EED, EZH2, RBBP4, RBBP7 and SUZ12. The PRC2/EED-EZH2 complex may also associate with HDAC1. Component of the NURF-1 ISWI chromatin remodeling complex (also called the nucleosome-remodeling factor (NURF) complex) at least composed of SMARCA1, BPTF, RBBP4 and RBBP7. Within the complex interacts with SMARCA1. Component of the BPFT-SMARCA1 complex at least composed of SMARCA1, BPFT, RBBP4 and RBBP7; the complex is catalytically inactive and does not remodel chromatin. Within the complex interacts with SMARCA1. Interacts with BRCA1. Interacts with CDK2AP1. Interacts with CENPA. Interacts with CHD3. Interacts with CHD4. Interacts with CREBBP, and this interaction may be enhanced by the binding of phosphorylated CREB1 to CREBBP. Interacts with HDAC7. Interacts with MTA1. Interacts with PWWP2B. Interacts with RB1 (via viral protein-binding domain). Interacts with SUV39H1.

It is found in the nucleus. Its function is as follows. Core histone-binding subunit that may target chromatin remodeling factors, histone acetyltransferases and histone deacetylases to their histone substrates in a manner that is regulated by nucleosomal DNA. Component of several complexes which regulate chromatin metabolism. These include the type B histone acetyltransferase (HAT) complex, which is required for chromatin assembly following DNA replication; the core histone deacetylase (HDAC) complex, which promotes histone deacetylation and consequent transcriptional repression; the nucleosome remodeling and histone deacetylase complex (the NuRD complex), which promotes transcriptional repression by histone deacetylation and nucleosome remodeling; and the PRC2/EED-EZH2 complex, which promotes repression of homeotic genes during development; and the NURF (nucleosome remodeling factor) complex. The protein is Histone-binding protein RBBP7 (RBBP7) of Pongo abelii (Sumatran orangutan).